We begin with the raw amino-acid sequence, 460 residues long: V-type ATP synthase beta chain (460 aa).

It belongs to the ATPase alpha/beta chains family.

Its function is as follows. Produces ATP from ADP in the presence of a proton gradient across the membrane. The V-type beta chain is a regulatory subunit. The chain is V-type ATP synthase beta chain from Acetivibrio thermocellus (strain ATCC 27405 / DSM 1237 / JCM 9322 / NBRC 103400 / NCIMB 10682 / NRRL B-4536 / VPI 7372) (Clostridium thermocellum).